A 630-amino-acid polypeptide reads, in one-letter code: Replication protein A 70 kDa DNA-binding subunit B (630 aa).

The OB DNA-binding region spans 200-282 (IIKVRVTSKG…KTVHNDYEMT (83 aa)). A C4-type zinc finger spans residues 496 to 516 (CKTCNKKVTEAIGSGYWCEGC).

It belongs to the replication factor A protein 1 family. Heterotrimer of RPA1, RPA2 and RPA3 (canonical replication protein A complex). Interacts with RPA2A. In terms of tissue distribution, expressed in root tips, roots, shoot apical meristem (SAM) and young leaves, and at lower levels in mature leaves, flag leaves and ears.

The protein resides in the nucleus. In terms of biological role, component of the replication protein A complex (RPA) required for DNA recombination, repair and replication. The activity of RPA is mediated by single-stranded DNA binding and protein interactions. Probably involved in repair of double-strand DNA breaks (DSBs) induced by genotoxic stresses. This chain is Replication protein A 70 kDa DNA-binding subunit B (RPA1B), found in Oryza sativa subsp. japonica (Rice).